The primary structure comprises 377 residues: Chaperone protein DnaJ (377 aa).

Residues 5–70 form the J domain; the sequence is DYYEVLGLQK…QKRAAYDQYG (66 aa). The CR-type zinc finger occupies 134 to 212; the sequence is GCKKDIRLST…CHGDGRVQKA (79 aa). 8 residues coordinate Zn(2+): Cys147, Cys150, Cys164, Cys167, Cys186, Cys189, Cys200, and Cys203. CXXCXGXG motif repeat units follow at residues 147–154, 164–171, 186–193, and 200–207; these read CDNCHGTG, CPHCHGAG, CPSCHGTG, and CHSCHGDG.

It belongs to the DnaJ family. In terms of assembly, homodimer. The cofactor is Zn(2+).

The protein localises to the cytoplasm. Participates actively in the response to hyperosmotic and heat shock by preventing the aggregation of stress-denatured proteins and by disaggregating proteins, also in an autonomous, DnaK-independent fashion. Unfolded proteins bind initially to DnaJ; upon interaction with the DnaJ-bound protein, DnaK hydrolyzes its bound ATP, resulting in the formation of a stable complex. GrpE releases ADP from DnaK; ATP binding to DnaK triggers the release of the substrate protein, thus completing the reaction cycle. Several rounds of ATP-dependent interactions between DnaJ, DnaK and GrpE are required for fully efficient folding. Also involved, together with DnaK and GrpE, in the DNA replication of plasmids through activation of initiation proteins. This is Chaperone protein DnaJ from Haemophilus ducreyi (strain 35000HP / ATCC 700724).